A 507-amino-acid chain; its full sequence is Zinc finger CCCH-type with G patch domain-containing protein (507 aa).

Met1 is modified (N-acetylmethionine). The disordered stretch occupies residues 88 to 125 (PVDPGNDSKTVPGSEVQPTPTSSALEEEEEDPDLEDLS). Positions 94–111 (DSKTVPGSEVQPTPTSSA) are enriched in polar residues. The span at 112 to 123 (LEEEEEDPDLED) shows a compositional bias: acidic residues. A C3H1-type zinc finger spans residues 170-196 (KSLKPCPFFLEGKCRFKENCRFSHGQL). The segment at 264-283 (LRTEATDSSDSDTGDASDSS) is disordered. Ser272 carries the post-translational modification Phosphoserine. Thr276 carries the phosphothreonine modification. One can recognise a G-patch domain in the interval 309 to 355 (TRGIGSKLLVKMGYEFGKGLGRHAEGRVEPIHAVVLPRGKSLDQCAE). The residue at position 349 (Ser349) is a Phosphoserine. Disordered regions lie at residues 359 to 389 (KKTKQGQTGASRPPRCRRRSSRPEGRPPPRN) and 486 to 507 (AQEADLQRKQRKADTHRKMTEF). Over residues 487 to 507 (QEADLQRKQRKADTHRKMTEF) the composition is skewed to basic and acidic residues.

Interacts with CHD4/Mi-2; the interaction is direct.

It is found in the nucleus. Transcription repressor that specifically binds the 5'-GGAG[GA]A[GA]A-3' consensus sequence. Represses transcription by recruiting the chromatin multiprotein complex NuRD to target promoters. Negatively regulates expression of EGFR, a gene involved in cell proliferation, survival and migration. Its ability to repress genes of the EGFR pathway suggest it may act as a tumor suppressor. The polypeptide is Zinc finger CCCH-type with G patch domain-containing protein (Zgpat) (Rattus norvegicus (Rat)).